A 466-amino-acid polypeptide reads, in one-letter code: MESSMNVREYSNISMIKGPLLMVQGVADSAYNELVEVEMPNGERRRGIVVDSQKGISIVQVFEGTRGISPVGTTVRFLGRGLEVKISEEMLGRIFNPLGDPLDNGPMVIKGEKRDINGEPLNPAIRDYPEEFIQTGISAIDGLNSLLRGQKLPIFSGSGLPANILAAQIAKQATVRGEESNFAVVFGAIGVRYDEALFFRKFFEETGAINRVALIMSLANEPPVMKTLTPKTALTLAEYLAFEQDMHVLAILIDMTNYCEALREISASKEEVPGRGGYPGYMYTDLAQTYERAGKVIGKKGSITQMPILTMPNDDITHPIPDLTGYITEGQITLDRSLYNKGIYPPINVLMSLSRLAKDGIGEGKTRDDHKDLSNQLFAAYAKAVDTRGLAAIIGEDSLSDTDKKYLMFGDAFERKFVSQGVNENRDIETTLDIGWEVLSILPERELTNVKVDYIKKYHPAYRGKK.

The protein belongs to the ATPase alpha/beta chains family. As to quaternary structure, has multiple subunits with at least A(3), B(3), C, D, E, F, H, I and proteolipid K(x).

Its subcellular location is the cell membrane. Its function is as follows. Component of the A-type ATP synthase that produces ATP from ADP in the presence of a proton gradient across the membrane. The B chain is a regulatory subunit. The polypeptide is A-type ATP synthase subunit B (Metallosphaera sedula (strain ATCC 51363 / DSM 5348 / JCM 9185 / NBRC 15509 / TH2)).